The sequence spans 209 residues: Peptidyl-tRNA hydrolase (209 aa).

Tyr-14 contributes to the tRNA binding site. His-19 serves as the catalytic Proton acceptor. TRNA is bound by residues Tyr-68, Asn-70, and Asn-116.

This sequence belongs to the PTH family. Monomer.

It is found in the cytoplasm. It catalyses the reaction an N-acyl-L-alpha-aminoacyl-tRNA + H2O = an N-acyl-L-amino acid + a tRNA + H(+). Its function is as follows. Hydrolyzes ribosome-free peptidyl-tRNAs (with 1 or more amino acids incorporated), which drop off the ribosome during protein synthesis, or as a result of ribosome stalling. Catalyzes the release of premature peptidyl moieties from peptidyl-tRNA molecules trapped in stalled 50S ribosomal subunits, and thus maintains levels of free tRNAs and 50S ribosomes. This is Peptidyl-tRNA hydrolase from Phenylobacterium zucineum (strain HLK1).